Reading from the N-terminus, the 289-residue chain is Nucleotide-binding protein COPRO5265_0725 (289 aa).

Residue 9 to 16 participates in ATP binding; sequence GLSGAGKS. Residue 59-62 coordinates GTP; it reads DSRS.

It belongs to the RapZ-like family.

In terms of biological role, displays ATPase and GTPase activities. In Coprothermobacter proteolyticus (strain ATCC 35245 / DSM 5265 / OCM 4 / BT), this protein is Nucleotide-binding protein COPRO5265_0725.